We begin with the raw amino-acid sequence, 500 residues long: Potassium voltage-gated channel subfamily V member 1 (500 aa).

Topologically, residues 1-210 are cytoplasmic; the sequence is MPSSGRALLD…EKPGSSTAAR (210 aa). Positions 168-181 are enriched in basic and acidic residues; that stretch reads KKDTEDQESQHESE. The segment at 168–189 is disordered; sequence KKDTEDQESQHESEQDFSQGPC. Residues 211-231 form a helical membrane-spanning segment; sequence IFGVISIIFVVVSIINMALMS. At 232–238 the chain is on the extracellular side; sequence AELSWLD. Residues 239–259 traverse the membrane as a helical segment; that stretch reads LQLLEILEYVCISWFTGEFVL. The Cytoplasmic portion of the chain corresponds to 260–276; it reads RFLCVRDRCRFLRKVPN. A helical transmembrane segment spans residues 277–297; the sequence is IIDLLAILPFYITLLVESLSG. The Extracellular segment spans residues 298–309; that stretch reads SQTTQELENVGR. Residues 310-331 traverse the membrane as a helical; Voltage-sensor segment; it reads IVQVLRLLRALRMLKLGRHSTG. At 332–345 the chain is on the cytoplasmic side; sequence LRSLGMTITQCYEE. The helical transmembrane segment at 346 to 366 threads the bilayer; the sequence is VGLLLLFLSVGISIFSTVEYF. The short motif at 392-397 is the Selectivity filter element; that stretch reads TVGYGD. A helical transmembrane segment spans residues 407 to 427; that stretch reads IVAFMCILSGILVLALPIAII. Residues 428-500 are Cytoplasmic-facing; the sequence is NDRFSACYFT…RSSGGDDFWF (73 aa).

Belongs to the potassium channel family. V (TC 1.A.1.2) subfamily. Kv8.1/KCNV1 sub-subfamily. Heteromultimer with KCNB1 and KCNB2. Interacts with KCNC4 and KCND1. Detected in brain.

The protein resides in the cell membrane. In terms of biological role, potassium channel subunit that does not form functional channels by itself. Modulates KCNB1 and KCNB2 channel activity by shifting the threshold for inactivation to more negative values and by slowing the rate of inactivation. Can down-regulate the channel activity of KCNB1, KCNB2, KCNC4 and KCND1, possibly by trapping them in intracellular membranes. The chain is Potassium voltage-gated channel subfamily V member 1 (KCNV1) from Homo sapiens (Human).